Here is a 370-residue protein sequence, read N- to C-terminus: ECF RNA polymerase sigma factor SigG (370 aa).

The tract at residues 63–129 (EPYRRELLAH…LTALEGRRRR (67 aa)) is sigma-70 factor domain-2. Residues 85-88 (DLVQ) carry the Polymerase core binding motif. The segment at 180 to 232 (LAFVAALQHLSPRQRAVLLLRDVLQWKSAEVADAIGTSTVAVNSLLQRARSQL) is sigma-70 factor domain-4. Residues 207–226 (SAEVADAIGTSTVAVNSLLQ) constitute a DNA-binding region (H-T-H motif).

The protein belongs to the sigma-70 factor family. ECF subfamily. As to quaternary structure, interacts transiently with the RNA polymerase catalytic core formed by RpoA, RpoB, RpoC and RpoZ (2 alpha, 1 beta, 1 beta' and 1 omega subunit) to form the RNA polymerase holoenzyme that can initiate transcription.

In terms of biological role, sigma factors are initiation factors that promote the attachment of RNA polymerase to specific initiation sites and are then released. Extracytoplasmic function (ECF) sigma factors are held in an inactive form by a cognate anti-sigma factor until released, although no anti-sigma factor is known for this protein. May be involved in host intracellular survival after infection (strains H37Rv and CDC 1551). A role in the SOS response is controversial; it has been seen in strain CDC 1551 but not in H37Rv. The protein is ECF RNA polymerase sigma factor SigG (sigG) of Mycobacterium tuberculosis (strain CDC 1551 / Oshkosh).